Reading from the N-terminus, the 344-residue chain is DNA fragmentation factor subunit beta (344 aa).

A CIDE-N domain is found at 7–83 (QPKCVKLRAL…LLTAGETWHG (77 aa)).

As to quaternary structure, heterodimer of DFFA and DFFB. Interacts with H1-1.

The protein resides in the cytoplasm. The protein localises to the nucleus. With respect to regulation, inhibited by DFFA (DFF45). Its function is as follows. Nuclease that induces DNA fragmentation and chromatin condensation during apoptosis. Degrades naked DNA and induces apoptotic morphology. This is DNA fragmentation factor subunit beta (Dffb) from Mus musculus (Mouse).